The sequence spans 370 residues: Phospho-2-dehydro-3-deoxyheptonate aldolase, tyrosine-inhibited (370 aa).

It belongs to the class-I DAHP synthase family.

It catalyses the reaction D-erythrose 4-phosphate + phosphoenolpyruvate + H2O = 7-phospho-2-dehydro-3-deoxy-D-arabino-heptonate + phosphate. The protein operates within metabolic intermediate biosynthesis; chorismate biosynthesis; chorismate from D-erythrose 4-phosphate and phosphoenolpyruvate: step 1/7. Inhibited by tyrosine. In terms of biological role, stereospecific condensation of phosphoenolpyruvate (PEP) and D-erythrose-4-phosphate (E4P) giving rise to 3-deoxy-D-arabino-heptulosonate-7-phosphate (DAHP). This is Phospho-2-dehydro-3-deoxyheptonate aldolase, tyrosine-inhibited (ARO4) from Candida albicans (strain SC5314 / ATCC MYA-2876) (Yeast).